A 412-amino-acid chain; its full sequence is Phytoene synthase, chloroplastic (412 aa).

Belongs to the phytoene/squalene synthase family. Monomer. As to expression, expressed in roots, leaves, flower buds, sepals, petals, lips and lip crests.

The protein resides in the plastid. The protein localises to the chloroplast. It catalyses the reaction 2 (2E,6E,10E)-geranylgeranyl diphosphate = 15-cis-phytoene + 2 diphosphate. Its pathway is carotenoid biosynthesis; phytoene biosynthesis; all-trans-phytoene from geranylgeranyl diphosphate: step 1/1. In terms of biological role, catalyzes the reaction from prephytoene diphosphate to phytoene. The sequence is that of Phytoene synthase, chloroplastic (PSY) from Oncidium hybrid cultivar (Orchid).